A 395-amino-acid chain; its full sequence is Renin (395 aa).

The signal sequence occupies residues 1-21 (MLRSWEFVLLISCFLCFSSDA). The propeptide at 22-43 (LQRISLKKMPSIRETLQEMGMK) is activation peptide. N-linked (GlcNAc...) asparagine glycosylation is present at Asn64. Positions 79–392 (YYGEISIGTP…DRQNNRIGFA (314 aa)) constitute a Peptidase A1 domain. Asp97 is an active-site residue. 2 disulfide bridges follow: Cys110–Cys117 and Cys274–Cys278. Residue Asp283 is part of the active site. Cys316 and Cys351 are joined by a disulfide.

It belongs to the peptidase A1 family. In terms of processing, N-glycosylated. Expressed by the venom gland (at protein level).

It localises to the secreted. The enzyme catalyses Cleavage of Leu-|-Xaa bond in angiotensinogen to generate angiotensin I.. Inhibited completely by aspartyl protease inhibitor pepstatin A, but not by the serine- or metalloproteinase inhibitors PMSF or EDTA. Functionally, renin is a highly specific endopeptidase, whose only known function is to generate angiotensin I from angiotensinogen in the plasma, initiating a cascade of reactions that produce an elevation of blood pressure and increased sodium retention by the kidney. This protein is also found in snake venom and shown to specifically cleave human and porcine angiotensinogen into angiotensin I. It does not have general protease activity, no cleavage of alpha or beta casein. May be directly responsible for elevation of blood pressure in the victims of envenomation. The chain is Renin from Echis ocellatus (Ocellated saw-scaled viper).